Reading from the N-terminus, the 1155-residue chain is DNA-directed RNA polymerase subunit beta (1155 aa).

Belongs to the RNA polymerase beta chain family. As to quaternary structure, the RNAP catalytic core consists of 2 alpha, 1 beta, 1 beta' and 1 omega subunit. When a sigma factor is associated with the core the holoenzyme is formed, which can initiate transcription.

The enzyme catalyses RNA(n) + a ribonucleoside 5'-triphosphate = RNA(n+1) + diphosphate. Functionally, DNA-dependent RNA polymerase catalyzes the transcription of DNA into RNA using the four ribonucleoside triphosphates as substrates. The protein is DNA-directed RNA polymerase subunit beta of Borrelia turicatae (strain 91E135).